The sequence spans 154 residues: Cyanate hydratase (154 aa).

Active-site residues include R100, E103, and S126.

The protein belongs to the cyanase family.

The enzyme catalyses cyanate + hydrogencarbonate + 3 H(+) = NH4(+) + 2 CO2. Catalyzes the reaction of cyanate with bicarbonate to produce ammonia and carbon dioxide. The sequence is that of Cyanate hydratase from Aspergillus fumigatus (strain ATCC MYA-4609 / CBS 101355 / FGSC A1100 / Af293) (Neosartorya fumigata).